The chain runs to 361 residues: Peroxidase A (361 aa).

The protein belongs to the peroxidase family. Partially N-glycosylated.

The protein resides in the secreted. It carries out the reaction 2 a phenolic donor + H2O2 = 2 a phenolic radical donor + 2 H2O. The polypeptide is Peroxidase A (Aloe vera (Aloe)).